Here is an 84-residue protein sequence, read N- to C-terminus: Large ribosomal subunit protein bL27 (84 aa).

The tract at residues 1–22 (MAHKKAGGSTRNGRDSESKRLG) is disordered.

It belongs to the bacterial ribosomal protein bL27 family.

The chain is Large ribosomal subunit protein bL27 from Shewanella baltica (strain OS223).